The primary structure comprises 57 residues: UPF0391 membrane protein RPC_3278 (57 aa).

The next 2 helical transmembrane spans lie at 4–24 (WVIT…GGIA) and 30–50 (IAKI…VVGL).

It belongs to the UPF0391 family.

The protein localises to the cell membrane. This Rhodopseudomonas palustris (strain BisB18) protein is UPF0391 membrane protein RPC_3278.